The following is a 461-amino-acid chain: D-phenylhydantoinase (461 aa).

3 residues coordinate a divalent metal cation: H59, H61, and K151. N6-carboxylysine is present on K151. Substrate is bound at residue Y156. Positions 182 and 239 each coordinate a divalent metal cation. S286 provides a ligand contact to substrate. A divalent metal cation is bound at residue D313. Position 335 (N335) interacts with substrate.

It belongs to the metallo-dependent hydrolases superfamily. Hydantoinase/dihydropyrimidinase family. In terms of assembly, homotetramer. A divalent metal cation is required as a cofactor. Carboxylation allows a single lysine to coordinate two divalent metal cations.

The catalysed reaction is D-5-phenylhydantoin + H2O = N-carbamoyl-D-phenylglycine + H(+). Functionally, catalyzes the stereospecific hydrolysis of the cyclic amide bond of D-hydantoin derivatives with an aromatic side chains at the 5'-position. Has no activity on dihydropyrimidines. The physiological function is unknown. The polypeptide is D-phenylhydantoinase (Escherichia coli (strain SE11)).